Consider the following 722-residue polypeptide: Protein Aster-A (722 aa).

Positions 1-62 (MFDTTPHSGR…KSGVSGTLST (62 aa)) are disordered. The segment covering 8 to 18 (SGRSSPSSSPS) has biased composition (low complexity). Positions 93–160 (EDFRKLFSKL…KEVTCLKKEK (68 aa)) constitute a GRAM domain. A disordered region spans residues 256–336 (ISPSGAADHS…DGPTSSLGPL (81 aa)). Phosphoserine is present on residues S265, S269, S273, and S417. A VASt domain is found at 369-540 (SGRLLINSVF…ELAKAEKLSL (172 aa)). The interval 561–600 (LSWRGHRDGPQHPDPDPCTQTSMHTSGSLSSRFSEPSVDQ) is disordered. The segment covering 565–575 (GHRDGPQHPDP) has biased composition (basic and acidic residues). The span at 578–594 (CTQTSMHTSGSLSSRFS) shows a compositional bias: polar residues. Residues 609–629 (ALVLISIVLIVLIALNALLFY) traverse the membrane as a helical segment.

Highly expressed in the brain.

Its subcellular location is the endoplasmic reticulum membrane. The protein resides in the cell membrane. It localises to the cytoplasmic vesicle. It is found in the autophagosome. Cholesterol transporter that mediates non-vesicular transport of cholesterol from the plasma membrane (PM) to the endoplasmic reticulum (ER). Contains unique domains for binding cholesterol and the PM, thereby serving as a molecular bridge for the transfer of cholesterol from the PM to the ER. Plays a crucial role in cholesterol homeostasis and has the unique ability to localize to the PM based on the level of membrane cholesterol. In lipid-poor conditions localizes to the ER membrane and in response to excess cholesterol in the PM is recruited to the endoplasmic reticulum-plasma membrane contact sites (EPCS) which is mediated by the GRAM domain. At the EPCS, the sterol-binding VASt/ASTER domain binds to the cholesterol in the PM and facilitates its transfer from the PM to ER. May play a role in tumor progression. Plays a role in autophagy regulation and is required for biogenesis of the autophagosome. This function in autophagy requires its cholesterol-transfer activity. This Mus musculus (Mouse) protein is Protein Aster-A.